We begin with the raw amino-acid sequence, 259 residues long: Ribosomal RNA small subunit methyltransferase A (259 aa).

Residues N13, T15, G40, E61, D85, and N105 each contribute to the S-adenosyl-L-methionine site.

Belongs to the class I-like SAM-binding methyltransferase superfamily. rRNA adenine N(6)-methyltransferase family. RsmA subfamily.

Its subcellular location is the cytoplasm. It catalyses the reaction adenosine(1518)/adenosine(1519) in 16S rRNA + 4 S-adenosyl-L-methionine = N(6)-dimethyladenosine(1518)/N(6)-dimethyladenosine(1519) in 16S rRNA + 4 S-adenosyl-L-homocysteine + 4 H(+). In terms of biological role, specifically dimethylates two adjacent adenosines (A1518 and A1519) in the loop of a conserved hairpin near the 3'-end of 16S rRNA in the 30S particle. May play a critical role in biogenesis of 30S subunits. The polypeptide is Ribosomal RNA small subunit methyltransferase A (Mycoplasma genitalium (strain ATCC 33530 / DSM 19775 / NCTC 10195 / G37) (Mycoplasmoides genitalium)).